Here is a 377-residue protein sequence, read N- to C-terminus: RCC1 domain-containing protein 1 (377 aa).

Residues 1-172 form an interaction with KDM8 region; sequence MAEKRHGAWF…VRQLELGAEH (172 aa). An RCC1 1 repeat occupies 6-57; the sequence is HGAWFGFGFCGFGQALGSGNSHHSVYSPEPLHASDDICQVSAGWSYTALVTR. The residue at position 144 (Arg-144) is a (3R)-3-hydroxyarginine. 3 RCC1 repeats span residues 179 to 230, 232 to 289, and 319 to 372; these read AGQV…CLSE, GDIY…IAIQ, and TGEL…VYAM.

Found in a complex with KDM8. Interacts (via N-terminus) with KDM8 (via N-terminus). In terms of processing, specifically hydroxylated (with R stereochemistry) at C-3 of ARG-141 by KDM8.

It is found in the chromosome. Its function is as follows. Plays a role in transcriptional repression of satellite repeats, possibly by regulating H3K36 methylation levels in centromeric regions together with KDM8. Possibly together with KDM8, is involved in proper mitotic spindle organization and chromosome segregation. Plays a role in regulating alpha-tubulin deacetylation and cytoskeletal microtubule stability, thereby promoting cell migration and TGF-beta-induced epithelial to mesenchymal transition (EMT), potentially through the inhibition of KDM8. The protein is RCC1 domain-containing protein 1 (Rccd1) of Mus musculus (Mouse).